A 401-amino-acid polypeptide reads, in one-letter code: Glutamyl-tRNA reductase (401 aa).

Substrate-binding positions include 45–48 (TCNR), Ser-101, 106–108 (EDQ), and Gln-112. The active-site Nucleophile is Cys-46. 177 to 182 (GYGEVG) lines the NADP(+) pocket.

It belongs to the glutamyl-tRNA reductase family. As to quaternary structure, homodimer.

The catalysed reaction is (S)-4-amino-5-oxopentanoate + tRNA(Glu) + NADP(+) = L-glutamyl-tRNA(Glu) + NADPH + H(+). Its pathway is porphyrin-containing compound metabolism; protoporphyrin-IX biosynthesis; 5-aminolevulinate from L-glutamyl-tRNA(Glu): step 1/2. Functionally, catalyzes the NADPH-dependent reduction of glutamyl-tRNA(Glu) to glutamate 1-semialdehyde (GSA). The sequence is that of Glutamyl-tRNA reductase from Clostridium beijerinckii (strain ATCC 51743 / NCIMB 8052) (Clostridium acetobutylicum).